We begin with the raw amino-acid sequence, 204 residues long: Imidazoleglycerol-phosphate dehydratase (204 aa).

The tract at residues 183–204 is disordered; that stretch reads DPRMDGITPSTKGTLSESGDSQ. A compositionally biased stretch (polar residues) spans 190–204; it reads TPSTKGTLSESGDSQ.

This sequence belongs to the imidazoleglycerol-phosphate dehydratase family.

It is found in the cytoplasm. It carries out the reaction D-erythro-1-(imidazol-4-yl)glycerol 3-phosphate = 3-(imidazol-4-yl)-2-oxopropyl phosphate + H2O. Its pathway is amino-acid biosynthesis; L-histidine biosynthesis; L-histidine from 5-phospho-alpha-D-ribose 1-diphosphate: step 6/9. The polypeptide is Imidazoleglycerol-phosphate dehydratase (Alcanivorax borkumensis (strain ATCC 700651 / DSM 11573 / NCIMB 13689 / SK2)).